Reading from the N-terminus, the 373-residue chain is PqqA peptide cyclase (373 aa).

The region spanning 9–224 is the Radical SAM core domain; it reads LTKPRWLLAE…QSYKEKVKGR (216 aa). [4Fe-4S] cluster contacts are provided by Cys-23, Cys-27, and Cys-30.

The protein belongs to the radical SAM superfamily. PqqE family. Interacts with PqqD. The interaction is necessary for activity of PqqE. Requires [4Fe-4S] cluster as cofactor.

It catalyses the reaction [PQQ precursor protein] + S-adenosyl-L-methionine = E-Y cross-linked-[PQQ precursor protein] + 5'-deoxyadenosine + L-methionine + H(+). Its pathway is cofactor biosynthesis; pyrroloquinoline quinone biosynthesis. In terms of biological role, catalyzes the cross-linking of a glutamate residue and a tyrosine residue in the PqqA protein as part of the biosynthesis of pyrroloquinoline quinone (PQQ). The protein is PqqA peptide cyclase of Methylococcus capsulatus (strain ATCC 33009 / NCIMB 11132 / Bath).